Here is a 219-residue protein sequence, read N- to C-terminus: Probable glucosamine 6-phosphate N-acetyltransferase (219 aa).

Positions 42 to 198 (MKVRPLKDTD…EGPTLKRNAT (157 aa)) constitute an N-acetyltransferase domain. Substrate is bound by residues Thr-64, 111–114 (KFIH), and 123–125 (EDV). Position 133–138 (133–138 (GKQLGK)) interacts with acetyl-CoA. Substrate-binding positions include 154 to 155 (YK) and Arg-186.

Belongs to the acetyltransferase family. GNA1 subfamily.

The catalysed reaction is D-glucosamine 6-phosphate + acetyl-CoA = N-acetyl-D-glucosamine 6-phosphate + CoA + H(+). It functions in the pathway nucleotide-sugar biosynthesis; UDP-N-acetyl-alpha-D-glucosamine biosynthesis; N-acetyl-alpha-D-glucosamine 1-phosphate from alpha-D-glucosamine 6-phosphate (route I): step 1/2. The chain is Probable glucosamine 6-phosphate N-acetyltransferase from Drosophila melanogaster (Fruit fly).